We begin with the raw amino-acid sequence, 378 residues long: Glutamate 5-kinase (378 aa).

Lysine 20 is an ATP binding site. Residues serine 60, aspartate 147, and asparagine 159 each contribute to the substrate site. ATP contacts are provided by residues 179–180 and 221–227; these read TD and TGGMLTK. The 79-residue stretch at 286-364 folds into the PUA domain; it reads RGRVVLDDGA…SQIARILGSM (79 aa).

It belongs to the glutamate 5-kinase family.

The protein resides in the cytoplasm. The enzyme catalyses L-glutamate + ATP = L-glutamyl 5-phosphate + ADP. It functions in the pathway amino-acid biosynthesis; L-proline biosynthesis; L-glutamate 5-semialdehyde from L-glutamate: step 1/2. Functionally, catalyzes the transfer of a phosphate group to glutamate to form L-glutamate 5-phosphate. The chain is Glutamate 5-kinase from Bordetella parapertussis (strain 12822 / ATCC BAA-587 / NCTC 13253).